A 289-amino-acid chain; its full sequence is MDDKSMARGRKAFVTGFPIRHSRSPLIHGFWLKELGIDGSYEAVEVKPEDFSSFAASLAANGFAGGNVTIPHKEAAYAAAESLDEAARAIGAVNTLWLENGRLCGGNTDAYGFAANLDASAPGWDKADRALVLGAGGASRAVVHALLSRGVCHVSVVNRTLSRAEELAAHFGARVYAHSWDEAQALVSNAGLIVNTTALGMSGHGEGQDFPIDLTCAPKEAVATDIVYVPLRTAFLNKAEKAGLKTVDGLGMLLHQAVPGFERWFGQRPQVTQALREHILADMAKAGAL.

Residues 22 to 24 (SRS) and Thr69 contribute to the shikimate site. Lys73 (proton acceptor) is an active-site residue. Glu85 serves as a coordination point for NADP(+). Asn94 and Asp109 together coordinate shikimate. NADP(+) is bound by residues 134–138 (GAGGA), 158–163 (NRTLSR), and Ile226. Tyr228 lines the shikimate pocket. Gly249 serves as a coordination point for NADP(+).

This sequence belongs to the shikimate dehydrogenase family. As to quaternary structure, homodimer.

It carries out the reaction shikimate + NADP(+) = 3-dehydroshikimate + NADPH + H(+). It functions in the pathway metabolic intermediate biosynthesis; chorismate biosynthesis; chorismate from D-erythrose 4-phosphate and phosphoenolpyruvate: step 4/7. In terms of biological role, involved in the biosynthesis of the chorismate, which leads to the biosynthesis of aromatic amino acids. Catalyzes the reversible NADPH linked reduction of 3-dehydroshikimate (DHSA) to yield shikimate (SA). The polypeptide is Shikimate dehydrogenase (NADP(+)) (Brucella abortus (strain S19)).